Reading from the N-terminus, the 164-residue chain is 6,7-dimethyl-8-ribityllumazine synthase (164 aa).

5-amino-6-(D-ribitylamino)uracil contacts are provided by residues Phe-22, 56-58 (AWE), and 80-82 (AVI). Position 85-86 (85-86 (DT)) interacts with (2S)-2-hydroxy-3-oxobutyl phosphate. Catalysis depends on His-88, which acts as the Proton donor. Leu-113 is a binding site for 5-amino-6-(D-ribitylamino)uracil. Arg-127 lines the (2S)-2-hydroxy-3-oxobutyl phosphate pocket.

It belongs to the DMRL synthase family.

The catalysed reaction is (2S)-2-hydroxy-3-oxobutyl phosphate + 5-amino-6-(D-ribitylamino)uracil = 6,7-dimethyl-8-(1-D-ribityl)lumazine + phosphate + 2 H2O + H(+). The protein operates within cofactor biosynthesis; riboflavin biosynthesis; riboflavin from 2-hydroxy-3-oxobutyl phosphate and 5-amino-6-(D-ribitylamino)uracil: step 1/2. Catalyzes the formation of 6,7-dimethyl-8-ribityllumazine by condensation of 5-amino-6-(D-ribitylamino)uracil with 3,4-dihydroxy-2-butanone 4-phosphate. This is the penultimate step in the biosynthesis of riboflavin. This is 6,7-dimethyl-8-ribityllumazine synthase from Gemmatimonas aurantiaca (strain DSM 14586 / JCM 11422 / NBRC 100505 / T-27).